The primary structure comprises 282 residues: Pantothenate synthetase (282 aa).

An ATP-binding site is contributed by 30 to 37 (MGYYHAGH). Histidine 37 (proton donor) is an active-site residue. Glutamine 61 serves as a coordination point for (R)-pantoate. Glutamine 61 is a binding site for beta-alanine. 147-150 (GQKD) serves as a coordination point for ATP. Glutamine 153 serves as a coordination point for (R)-pantoate. Residues valine 176 and 184–187 (LSSR) each bind ATP.

This sequence belongs to the pantothenate synthetase family. As to quaternary structure, homodimer.

The protein localises to the cytoplasm. It catalyses the reaction (R)-pantoate + beta-alanine + ATP = (R)-pantothenate + AMP + diphosphate + H(+). It participates in cofactor biosynthesis; (R)-pantothenate biosynthesis; (R)-pantothenate from (R)-pantoate and beta-alanine: step 1/1. Its function is as follows. Catalyzes the condensation of pantoate with beta-alanine in an ATP-dependent reaction via a pantoyl-adenylate intermediate. The chain is Pantothenate synthetase from Desulfovibrio desulfuricans (strain ATCC 27774 / DSM 6949 / MB).